The primary structure comprises 318 residues: Methionine import ATP-binding protein MetN (318 aa).

Residues 2 to 237 enclose the ABC transporter domain; that stretch reads IEIKDVGKIF…PEGELKKIIE (236 aa). Residue 34-41 coordinates ATP; it reads GRSGAGKS.

Belongs to the ABC transporter superfamily. Methionine importer (TC 3.A.1.24) family. In terms of assembly, the complex is composed of two ATP-binding proteins (MetN), two transmembrane proteins (MetI) and a solute-binding protein (MetQ).

The protein resides in the cell membrane. It carries out the reaction L-methionine(out) + ATP + H2O = L-methionine(in) + ADP + phosphate + H(+). It catalyses the reaction D-methionine(out) + ATP + H2O = D-methionine(in) + ADP + phosphate + H(+). Its function is as follows. Part of the ABC transporter complex MetNIQ involved in methionine import. Responsible for energy coupling to the transport system. The protein is Methionine import ATP-binding protein MetN of Clostridium tetani (strain Massachusetts / E88).